The sequence spans 300 residues: MEPPMDPSGGEQEPGAVRLLDLPWEDVLLPHVLSRVPLRQLLWLQRVSRAFRALVQLHLARLRRFDAAQVGPQIPRAALAWLLRDAEGLQELALAPCHEWLSDEDLVPVLARNPQLRSVALAGCGQLSRRALGALAEGCPRLQRLSLAHCDWVDGLALRGLADRCPALEELDLTACRQLKDEAIVYLAQRRGAGLRNLSLAVNANVGDTAVQELARNCPELQHLDLTGCLRVGSDGIRTLAEYCPALRSLRVRHCHHVAEPSLSRLRKRGVDIDVEPPLHQALVLLQDMVGFAPFVNLQV.

M1 is subject to N-acetylmethionine. Residues 19–66 (LLDLPWEDVLLPHVLSRVPLRQLLWLQRVSRAFRALVQLHLARLRRFD) form the F-box domain. The segment at 113–269 (NPQLRSVALA…EPSLSRLRKR (157 aa)) is interaction with SMURF1. LRR repeat units lie at residues 141–162 (RLQR…RGLA), 167–188 (ALEE…VYLA), 194–215 (GLRN…QELA), 220–241 (ELQH…RTLA), and 246–267 (ALRS…SRLR).

The protein belongs to the FBXL15 family. Part of the SCF (SKP1-CUL1-F-box) E3 ubiquitin-protein ligase complex SCF(FBXL15) composed of CUL1, SKP1, RBX1 and FBXL15.

Its subcellular location is the cytoplasm. It functions in the pathway protein modification; protein ubiquitination. Substrate recognition component of a SCF (SKP1-CUL1-F-box protein) E3 ubiquitin-protein ligase complex which mediates the ubiquitination and subsequent proteasomal degradation of SMURF1, thereby acting as a positive regulator of the BMP signaling pathway. Required for dorsal/ventral pattern formation and bone mass maintenance. Also mediates ubiquitination of SMURF2 and WWP2. This Bos taurus (Bovine) protein is F-box/LRR-repeat protein 15 (FBXL15).